The primary structure comprises 453 residues: Glutamyl-tRNA reductase (453 aa).

Residues 49–52 (TCNR), Ser109, 114–116 (EQQ), and Gln120 each bind substrate. Cys50 functions as the Nucleophile in the catalytic mechanism. 191-196 (GAGSMG) is an NADP(+) binding site. A disordered region spans residues 432-453 (PAAVATPTDLVDGDRTGRDLQA). Residues 443 to 453 (DGDRTGRDLQA) show a composition bias toward basic and acidic residues.

The protein belongs to the glutamyl-tRNA reductase family. Homodimer.

It carries out the reaction (S)-4-amino-5-oxopentanoate + tRNA(Glu) + NADP(+) = L-glutamyl-tRNA(Glu) + NADPH + H(+). It participates in porphyrin-containing compound metabolism; protoporphyrin-IX biosynthesis; 5-aminolevulinate from L-glutamyl-tRNA(Glu): step 1/2. In terms of biological role, catalyzes the NADPH-dependent reduction of glutamyl-tRNA(Glu) to glutamate 1-semialdehyde (GSA). This chain is Glutamyl-tRNA reductase, found in Rhodococcus erythropolis (strain PR4 / NBRC 100887).